Reading from the N-terminus, the 319-residue chain is Putative antiporter CaxA (319 aa).

Helical transmembrane passes span 3–23, 38–58, 81–101, 105–125, 127–147, 175–195, 208–228, 250–270, 275–292, and 297–317; these read VATIFVLVGLVLLIWSADRFV, MIIGLTIVAMGSSAPEIMVSA, ILLVIGATALLKPIAVASMTI, FPLLILVTLLGYLFLADQSLT, AEGALFLGGFVLFLVLMVYWG, VWLVLGLALLLASSQLLVHGA, LIGLTIIAIGTSLPELAASLI, ILAVLGVGTIIAPGVIDAAAA, YVMMAATLALLLMSLRLG, and INRVEGCILLMAFIGYQYLLF.

This sequence belongs to the Ca(2+):cation antiporter (CaCA) (TC 2.A.19) family.

It is found in the cell membrane. Functionally, confers modest Ca(2+) and Na(+) resistance. The sequence is that of Putative antiporter CaxA (caxA) from Alkalimonas amylolytica.